Consider the following 538-residue polypeptide: Prickle planar cell polarity protein 3-A (538 aa).

In terms of domain architecture, PET spans 66–175 (SGSQRDSLCE…CVRPVSGTMS (110 aa)). 3 consecutive LIM zinc-binding domains span residues 177-241 (TVCQ…ELKR), 242-302 (PRCL…LYAQ), and 305-366 (DSCG…NATP). A compositionally biased stretch (polar residues) spans 369–378 (SFSPSQTDLS). 3 disordered regions span residues 369–398 (SFSP…DGDS), 433–463 (RGAP…TRVT), and 475–538 (SVSL…CLLS). The span at 435–449 (APKEFSRECPNRRSL) shows a compositional bias: basic and acidic residues. The segment covering 451–463 (DLNSHTRTPTRVT) has biased composition (polar residues). Low complexity-rich tracts occupy residues 475 to 488 (SVSL…SSSS) and 514 to 523 (APPTHAPTST).

This sequence belongs to the prickle / espinas / testin family. As to quaternary structure, interacts with vangl2 via its C-terminus. The vangl2-dependent membrane recruitment of prickle3 is a prerequisite for its polarization. Interacts with wtip. Wtip is involved in the recruitment of prickle3 to the basal body. As to expression, predominantly expressed in the epidermal ectoderm.

Its subcellular location is the cytoplasm. It localises to the cell membrane. The protein localises to the mitochondrion. Functionally, involved in the planar cell polarity (PCP) pathway that is essential for the polarization of epithelial cells during morphogenetic processes, including gastrulation and neurulation. PCP is maintained by two molecular modules, the global and the core modules. Proteins of the core module include the proteins Frizzled (Fz), Disheveled (Dsh), Van Gogh (Vang), Prickle (Pk), Flamingo (Fmi, Celsr) and Diego (Dgo). The core module proteins develop subcellular asymmetry, accumulating in two groups on opposite sides of epithelial cells. Distinct proximal (Vang, Pk and Fmi) and distal (Fz, Dsh, Dgo and Fmi) complexes segregate to opposite sides of the cell, where they interact with the opposite complex in the neighboring cell at or near the adherents junctions. Directional information to orient polarization with respect to the tissue axes is provided by the global module which involves Wnt proteins. Involved in the organization of the basal body. Involved in cilia growth and positioning. Required for proper assembly, stability, and function of mitochondrial membrane ATP synthase (mitochondrial complex V). The protein is Prickle planar cell polarity protein 3-A (prickle3-a) of Xenopus laevis (African clawed frog).